We begin with the raw amino-acid sequence, 288 residues long: dTDP-4-keto-6-deoxy-D-glucose reductase (288 aa).

NADH contacts are provided by residues glycine 12–leucine 14, aspartate 38–isoleucine 39, alanine 62–threonine 64, tyrosine 127, and lysine 131. NADPH contacts are provided by residues methionine 13 to leucine 14, aspartate 38 to isoleucine 39, alanine 62 to threonine 64, tyrosine 127, and lysine 131. The active-site Proton donor/acceptor is the tyrosine 127.

It belongs to the dTDP-4-dehydrorhamnose reductase family. Mg(2+) is required as a cofactor.

It functions in the pathway antibiotic biosynthesis; novobiocin biosynthesis. In terms of biological role, reduces the product formed from the reaction of NovW with dTDP-4-keto-6-deoxy-D-glucose to result in dTDP-5-methyl-L-rhamnose in the novobiocin biosynthesis pathway, an aminocoumarin family antibiotic that targets bacterial DNA gyrases. The chain is dTDP-4-keto-6-deoxy-D-glucose reductase (novS) from Streptomyces niveus (Streptomyces spheroides).